Consider the following 90-residue polypeptide: Probable Fe(2+)-trafficking protein (90 aa).

This sequence belongs to the Fe(2+)-trafficking protein family.

Functionally, could be a mediator in iron transactions between iron acquisition and iron-requiring processes, such as synthesis and/or repair of Fe-S clusters in biosynthetic enzymes. The protein is Probable Fe(2+)-trafficking protein of Cupriavidus taiwanensis (strain DSM 17343 / BCRC 17206 / CCUG 44338 / CIP 107171 / LMG 19424 / R1) (Ralstonia taiwanensis (strain LMG 19424)).